The following is a 1122-amino-acid chain: Protein CAF130 (1122 aa).

A disordered region spans residues 1–24; the sequence is MTKKKAATNYAERQNLASEDSSGD. Over residues 11–24 the composition is skewed to polar residues; that stretch reads AERQNLASEDSSGD. S1042 carries the phosphoserine modification.

In terms of assembly, subunit of the 1.0 MDa CCR4-NOT core complex that contains CCR4, CAF1, NOT1, NOT2, NOT3, NOT4, NOT5, CAF40 and CAF130. In the complex interacts with NOT1. The core complex probably is part of a less characterized 1.9 MDa CCR4-NOT complex.

The protein localises to the cytoplasm. It localises to the nucleus. Acts as a component of the CCR4-NOT core complex, which in the nucleus seems to be a general transcription factor, and in the cytoplasm the major mRNA deadenylase involved in mRNA turnover. The chain is Protein CAF130 (CAF130) from Saccharomyces cerevisiae (strain ATCC 204508 / S288c) (Baker's yeast).